The following is a 176-amino-acid chain: Lipoprotein signal peptidase (176 aa).

Transmembrane regions (helical) follow at residues 12 to 32, 67 to 87, and 94 to 116; these read WYWM…WVLA, WQRW…TIWL, and MWRL…IDRL. Active-site residues include Asp-123 and Asp-141. A helical membrane pass occupies residues 137 to 157; sequence FNIADSAICVGAALIIIDSII.

It belongs to the peptidase A8 family.

The protein resides in the cell inner membrane. The catalysed reaction is Release of signal peptides from bacterial membrane prolipoproteins. Hydrolyzes -Xaa-Yaa-Zaa-|-(S,diacylglyceryl)Cys-, in which Xaa is hydrophobic (preferably Leu), and Yaa (Ala or Ser) and Zaa (Gly or Ala) have small, neutral side chains.. The protein operates within protein modification; lipoprotein biosynthesis (signal peptide cleavage). In terms of biological role, this protein specifically catalyzes the removal of signal peptides from prolipoproteins. This Shewanella woodyi (strain ATCC 51908 / MS32) protein is Lipoprotein signal peptidase.